A 375-amino-acid polypeptide reads, in one-letter code: Serpin B5 (375 aa).

Asparagine 133, asparagine 298, and asparagine 361 each carry an N-linked (GlcNAc...) asparagine glycan.

This sequence belongs to the serpin family. Ov-serpin subfamily. In terms of assembly, interacts with IRF6.

The protein resides in the secreted. Its subcellular location is the extracellular space. Functionally, tumor suppressor. It blocks the growth, invasion, and metastatic properties of mammary tumors. As it does not undergo the S (stressed) to R (relaxed) conformational transition characteristic of active serpins, it exhibits no serine protease inhibitory activity. The protein is Serpin B5 (Serpinb5) of Mus musculus (Mouse).